The primary structure comprises 146 residues: Hemoglobin subunit beta (146 aa).

The Globin domain maps to 2-146 (PFSAHEEKLI…VAAALSVEYY (145 aa)). 2 residues coordinate heme b: H63 and H92.

The protein belongs to the globin family. Heterotetramer of two alpha chains and two beta chains. When oxygenated in vitro, exists virtually only in polymeric form. When deoxygenated, forms tetramers, octamers and larger polymers. Red blood cells.

Its function is as follows. Involved in oxygen transport from the lung to the various peripheral tissues. This Paleosuchus palpebrosus (Cuvier's smooth-fronted caiman) protein is Hemoglobin subunit beta.